The sequence spans 594 residues: A-type ATP synthase subunit A (594 aa).

G236–T243 is an ATP binding site.

This sequence belongs to the ATPase alpha/beta chains family. Has multiple subunits with at least A(3), B(3), C, D, E, F, H, I and proteolipid K(x).

It localises to the cell membrane. The catalysed reaction is ATP + H2O + 4 H(+)(in) = ADP + phosphate + 5 H(+)(out). In terms of biological role, component of the A-type ATP synthase that produces ATP from ADP in the presence of a proton gradient across the membrane. The A chain is the catalytic subunit. The chain is A-type ATP synthase subunit A from Pyrobaculum calidifontis (strain DSM 21063 / JCM 11548 / VA1).